The sequence spans 99 residues: SAGA-associated factor 11 (99 aa).

The SGF11-type zinc-finger motif lies at 71 to 92; that stretch reads IHCENCGRDVSANRLAAHLQRC.

It belongs to the SGF11 family. In terms of assembly, component of the 1.8 MDa SAGA transcription coactivator-HAT complex. SAGA is built of 5 distinct domains with specialized functions. Within the SAGA complex, SUS1, SGF11, SGF73 and UBP8 form an additional subcomplex of SAGA called the DUB module (deubiquitination module). Interacts directly with SGF73, SUS1 and UBP8.

Its subcellular location is the nucleus. Functionally, functions as a component of the transcription regulatory histone acetylation (HAT) complex SAGA. At the promoters, SAGA is required for recruitment of the basal transcription machinery. It influences RNA polymerase II transcriptional activity through different activities such as TBP interaction and promoter selectivity, interaction with transcription activators, and chromatin modification through histone acetylation and deubiquitination. SAGA acetylates nucleosomal histone H3 to some extent (to form H3K9ac, H3K14ac, H3K18ac and H3K23ac). SAGA interacts with DNA via upstream activating sequences (UASs). Involved in transcriptional regulation of a subset of SAGA-regulated genes. Within the SAGA complex, participates in a subcomplex, that specifically deubiquitinates histones H2B. The protein is SAGA-associated factor 11 of Saccharomyces cerevisiae (strain RM11-1a) (Baker's yeast).